Consider the following 176-residue polypeptide: Large ribosomal subunit protein uL6 (176 aa).

The protein belongs to the universal ribosomal protein uL6 family. Part of the 50S ribosomal subunit.

This protein binds to the 23S rRNA, and is important in its secondary structure. It is located near the subunit interface in the base of the L7/L12 stalk, and near the tRNA binding site of the peptidyltransferase center. This Lactobacillus delbrueckii subsp. bulgaricus (strain ATCC 11842 / DSM 20081 / BCRC 10696 / JCM 1002 / NBRC 13953 / NCIMB 11778 / NCTC 12712 / WDCM 00102 / Lb 14) protein is Large ribosomal subunit protein uL6.